Reading from the N-terminus, the 1055-residue chain is Putative helicase/primase complex protein (1055 aa).

This sequence belongs to the asfivirus F1055L family.

In terms of biological role, may be involved in DNA replication. The protein is Putative helicase/primase complex protein of Ornithodoros (relapsing fever ticks).